Consider the following 188-residue polypeptide: dCTP deaminase (188 aa).

DCTP is bound by residues 111–116 (KSTYAR), 135–137 (TLE), Gln156, Tyr170, and Gln180. The active-site Proton donor/acceptor is the Glu137.

The protein belongs to the dCTP deaminase family. Homotrimer.

The enzyme catalyses dCTP + H2O + H(+) = dUTP + NH4(+). The protein operates within pyrimidine metabolism; dUMP biosynthesis; dUMP from dCTP (dUTP route): step 1/2. Catalyzes the deamination of dCTP to dUTP. The sequence is that of dCTP deaminase from Ectopseudomonas mendocina (strain ymp) (Pseudomonas mendocina).